A 151-amino-acid chain; its full sequence is Transcriptional regulator MraZ (151 aa).

SpoVT-AbrB domains are found at residues 5–52 and 81–124; these read ANAI…PLPE and AVDL…DEDA.

Belongs to the MraZ family. As to quaternary structure, forms oligomers.

The protein resides in the cytoplasm. It localises to the nucleoid. The protein is Transcriptional regulator MraZ of Pseudomonas aeruginosa (strain LESB58).